Here is a 396-residue protein sequence, read N- to C-terminus: Anhydro-N-acetylmuramic acid kinase (396 aa).

19–26 (GTSADGID) is an ATP binding site.

This sequence belongs to the anhydro-N-acetylmuramic acid kinase family.

The catalysed reaction is 1,6-anhydro-N-acetyl-beta-muramate + ATP + H2O = N-acetyl-D-muramate 6-phosphate + ADP + H(+). Its pathway is amino-sugar metabolism; 1,6-anhydro-N-acetylmuramate degradation. The protein operates within cell wall biogenesis; peptidoglycan recycling. Functionally, catalyzes the specific phosphorylation of 1,6-anhydro-N-acetylmuramic acid (anhMurNAc) with the simultaneous cleavage of the 1,6-anhydro ring, generating MurNAc-6-P. Is required for the utilization of anhMurNAc either imported from the medium or derived from its own cell wall murein, and thus plays a role in cell wall recycling. The protein is Anhydro-N-acetylmuramic acid kinase of Colwellia psychrerythraea (strain 34H / ATCC BAA-681) (Vibrio psychroerythus).